A 268-amino-acid chain; its full sequence is MEVPLYNLQASQVGNIELPPQFNEKIRFDVIKRAFLAIQSHKRQPYGASPIAGKQHSAWTSKRRRSWRTSYGRGISRVSRAILRRHGALFYWVARNIAQAVKGKKAHPPKAEKDWYEKINKKERRLAIRSALAATKELDLVKARGHIIDKPVPIVVDGLEQLRKTKEIQQLLLKLGLEKELERVYEIKRRAGKGKRRGRAYIERKGPLIVVNDYNEQLFKAVDNIPGLDIEEVPNLNVELLAPGAKPGRLLIISKDALETLRERKLFF.

It belongs to the universal ribosomal protein uL4 family. As to quaternary structure, part of the 50S ribosomal subunit.

One of the primary rRNA binding proteins, this protein initially binds near the 5'-end of the 23S rRNA. It is important during the early stages of 50S assembly. It makes multiple contacts with different domains of the 23S rRNA in the assembled 50S subunit and ribosome. Functionally, forms part of the polypeptide exit tunnel. This chain is Large ribosomal subunit protein uL4, found in Nanoarchaeum equitans (strain Kin4-M).